The following is a 308-amino-acid chain: Acetyl-coenzyme A carboxylase carboxyl transferase subunit beta (308 aa).

Positions 25–294 constitute a CoA carboxyltransferase N-terminal domain; the sequence is VWTKCTSCEQ…PLVVSVNDAP (270 aa). The Zn(2+) site is built by C29, C32, C48, and C51. The C4-type zinc-finger motif lies at 29 to 51; the sequence is CTSCEQVLYYAELERNLEVCPKC.

It belongs to the AccD/PCCB family. Acetyl-CoA carboxylase is a heterohexamer composed of biotin carboxyl carrier protein (AccB), biotin carboxylase (AccC) and two subunits each of ACCase subunit alpha (AccA) and ACCase subunit beta (AccD). The cofactor is Zn(2+).

The protein localises to the cytoplasm. The enzyme catalyses N(6)-carboxybiotinyl-L-lysyl-[protein] + acetyl-CoA = N(6)-biotinyl-L-lysyl-[protein] + malonyl-CoA. It functions in the pathway lipid metabolism; malonyl-CoA biosynthesis; malonyl-CoA from acetyl-CoA: step 1/1. In terms of biological role, component of the acetyl coenzyme A carboxylase (ACC) complex. Biotin carboxylase (BC) catalyzes the carboxylation of biotin on its carrier protein (BCCP) and then the CO(2) group is transferred by the transcarboxylase to acetyl-CoA to form malonyl-CoA. The sequence is that of Acetyl-coenzyme A carboxylase carboxyl transferase subunit beta from Vibrio cholerae serotype O1 (strain ATCC 39315 / El Tor Inaba N16961).